Reading from the N-terminus, the 457-residue chain is Protein translocase subunit SecY (457 aa).

The next 10 membrane-spanning stretches (helical) occupy residues 17–37 (IFFT…PVPG), 75–95 (IALG…LVVF), 120–140 (LFTL…ALRM), 163–183 (VFYL…MWIG), 195–215 (ISLI…GSIF), 230–250 (IVSL…TVLI), 287–307 (VIPV…GQFL), 326–346 (VVYS…WTAT), 386–406 (LLGA…GRIL), and 412–432 (VSYF…LDTM).

Belongs to the SecY/SEC61-alpha family. In terms of assembly, component of the Sec protein translocase complex. Heterotrimer consisting of SecY, SecE and SecG subunits. The heterotrimers can form oligomers, although 1 heterotrimer is thought to be able to translocate proteins. Interacts with the ribosome. Interacts with SecDF, and other proteins may be involved. Interacts with SecA.

The protein localises to the cell inner membrane. Functionally, the central subunit of the protein translocation channel SecYEG. Consists of two halves formed by TMs 1-5 and 6-10. These two domains form a lateral gate at the front which open onto the bilayer between TMs 2 and 7, and are clamped together by SecE at the back. The channel is closed by both a pore ring composed of hydrophobic SecY resides and a short helix (helix 2A) on the extracellular side of the membrane which forms a plug. The plug probably moves laterally to allow the channel to open. The ring and the pore may move independently. The chain is Protein translocase subunit SecY from Chlamydia muridarum (strain MoPn / Nigg).